Reading from the N-terminus, the 773-residue chain is Polyribonucleotide nucleotidyltransferase (773 aa).

Positions 490 and 496 each coordinate Mg(2+). Residues 557 to 616 (PKIDTITIPVDKIKVVIGKGGEQIDKIIAETGVKIDIDDEGLCSIFSSDQAAIDRAKEII) form the KH domain. The 69-residue stretch at 626–694 (GEIYDAKVVR…DKGRVDASMR (69 aa)) folds into the S1 motif domain. Positions 700 to 721 (PEGYVEPERKPRERRENGDRRK) are enriched in basic and acidic residues. The segment at 700-773 (PEGYVEPERK…FPELSTKKPE (74 aa)) is disordered. Over residues 739–748 (RNNQGNKVGN) the composition is skewed to low complexity. Positions 751 to 773 (FELRERKSHIDEEFPELSTKKPE) are enriched in basic and acidic residues.

Belongs to the polyribonucleotide nucleotidyltransferase family. Mg(2+) serves as cofactor.

Its subcellular location is the cytoplasm. It catalyses the reaction RNA(n+1) + phosphate = RNA(n) + a ribonucleoside 5'-diphosphate. Functionally, involved in mRNA degradation. Catalyzes the phosphorolysis of single-stranded polyribonucleotides processively in the 3'- to 5'-direction. This chain is Polyribonucleotide nucleotidyltransferase, found in Lactococcus lactis subsp. lactis (strain IL1403) (Streptococcus lactis).